The following is a 408-amino-acid chain: ATP phosphoribosyltransferase regulatory subunit (408 aa).

Belongs to the class-II aminoacyl-tRNA synthetase family. HisZ subfamily. In terms of assembly, heteromultimer composed of HisG and HisZ subunits.

The protein resides in the cytoplasm. It participates in amino-acid biosynthesis; L-histidine biosynthesis; L-histidine from 5-phospho-alpha-D-ribose 1-diphosphate: step 1/9. In terms of biological role, required for the first step of histidine biosynthesis. May allow the feedback regulation of ATP phosphoribosyltransferase activity by histidine. The chain is ATP phosphoribosyltransferase regulatory subunit from Gloeothece citriformis (strain PCC 7424) (Cyanothece sp. (strain PCC 7424)).